The chain runs to 623 residues: Quinoprotein ethanol dehydrogenase (623 aa).

Positions 1-34 (MTTRTSPAPAGLLRPSLHCLAFAVALGSAGAALA) are cleaved as a signal peptide. 3 residues coordinate Ca(2+): D45, T48, and D51. E95 is a pyrroloquinoline quinone binding site. C139 and C140 are disulfide-bonded. Pyrroloquinoline quinone is bound by residues R145, T189, and 207–209 (HGS). E213 serves as a coordination point for Ca(2+). The interval 244–281 (LNGKDSTVTGDVKAPSWPDDRNSPTGKVESWSHGGGAP) is disordered. Residues N300 and D350 each contribute to the Ca(2+) site. The active-site Proton acceptor is D350. Residue R378 participates in pyrroloquinoline quinone binding. Residues 413-434 (GRPVEREGQRPPLPEPGQKHGK) are disordered. 2 residues coordinate pyrroloquinoline quinone: W523 and A587.

It belongs to the bacterial PQQ dehydrogenase family. As to quaternary structure, homodimer. Interacts with cytochrome c550. Pyrroloquinoline quinone serves as cofactor. Ca(2+) is required as a cofactor. In terms of processing, the disulfide ring formed between the two adjacent cysteine residues Cys-139 and Cys-140 is essential for efficient electron transfer at pH 7 from QEDH to its natural electron acceptor cytochrome c550.

Its subcellular location is the periplasm. It carries out the reaction a primary alcohol + 2 Fe(III)-[cytochrome c] = an aldehyde + 2 Fe(II)-[cytochrome c] + 2 H(+). It catalyses the reaction ethanol + 2 Fe(III)-[cytochrome c] = acetaldehyde + 2 Fe(II)-[cytochrome c] + 2 H(+). The catalysed reaction is butan-1-ol + 2 Fe(III)-[cytochrome c] = butanal + 2 Fe(II)-[cytochrome c] + 2 H(+). The enzyme catalyses propan-2-ol + 2 Fe(III)-[cytochrome c] = acetone + 2 Fe(II)-[cytochrome c] + 2 H(+). It carries out the reaction 1-propanol + 2 Fe(III)-[cytochrome c] = propanal + 2 Fe(II)-[cytochrome c] + 2 H(+). The protein operates within alcohol metabolism; ethanol degradation; acetate from ethanol: step 1/2. Inhibited by cyclopropanone ethylhemiketal. Activated by ammonia (500mM), methylamine (5mM), ethylamine (5mM), octylamine (5mM), ethanolamine (5mM) and 1-amino-2-propanol (5mM), in assays using artificial electron acceptors. Ammonia is not needed for, nor does it stimulate, the ethanol-oxidizing activity when using the natural electron acceptor cytochrome c550. In terms of biological role, catalyzes the oxidation of ethanol and other primary alcohols to the corresponding aldehydes, except methanol, which is a very poor substrate. Uses a specific inducible cytochrome c550, encoded by the adjacent gene in the locus, as electron acceptor. Is a key enzyme of the carbon and energy metabolism during growth of P.aeruginosa on ethanol as the sole carbon and energy source. Is also able to use secondary alcohols as well as aminoalcohols like ethanolamine and 1-amino-2-propanol, and aldehydes as substrates. The sequence is that of Quinoprotein ethanol dehydrogenase from Pseudomonas aeruginosa (strain ATCC 15692 / DSM 22644 / CIP 104116 / JCM 14847 / LMG 12228 / 1C / PRS 101 / PAO1).